We begin with the raw amino-acid sequence, 185 residues long: Putative F-box protein At3g17400 (185 aa).

Residues Met1 to His47 enclose the F-box domain.

This is Putative F-box protein At3g17400 from Arabidopsis thaliana (Mouse-ear cress).